We begin with the raw amino-acid sequence, 71 residues long: Small ribosomal subunit protein eS17 (71 aa).

It belongs to the eukaryotic ribosomal protein eS17 family.

The polypeptide is Small ribosomal subunit protein eS17 (Pyrobaculum aerophilum (strain ATCC 51768 / DSM 7523 / JCM 9630 / CIP 104966 / NBRC 100827 / IM2)).